The following is a 272-amino-acid chain: D-aminoacyl-tRNA deacylase (272 aa).

The protein belongs to the DtdA deacylase family. In terms of assembly, monomer. Zn(2+) is required as a cofactor.

It carries out the reaction a D-aminoacyl-tRNA + H2O = a tRNA + a D-alpha-amino acid + H(+). The enzyme catalyses glycyl-tRNA(Ala) + H2O = tRNA(Ala) + glycine + H(+). In terms of biological role, D-aminoacyl-tRNA deacylase with broad substrate specificity. By recycling D-aminoacyl-tRNA to D-amino acids and free tRNA molecules, this enzyme counteracts the toxicity associated with the formation of D-aminoacyl-tRNA entities in vivo. This chain is D-aminoacyl-tRNA deacylase, found in Thermococcus kodakarensis (strain ATCC BAA-918 / JCM 12380 / KOD1) (Pyrococcus kodakaraensis (strain KOD1)).